We begin with the raw amino-acid sequence, 643 residues long: MIKVTLKDGSVKEFEAGLSVYEIAKSISEGLARNACCGVVNGKVCDLREEVKEDVSLSICTFDSQEGKDAVRHSISHVLAYAVKRLFPETKLAIGPSIATGFYYDFDKDVAFSAQDLEKLEAEMKKIIKENPSIEKFELPRNEALELMKDEPYKVELINDLGEDEIISFYKLGEFTDLCAGPHVMSLKPIKAIKLIRSAGAYWKGDEKNKMLTRIYGTAFLKKSELDEYLDAVEEAKKRDHNKLGRELKLFTTDENVGQGLPLLMPKGAKIVQTLQRWVEDEEERRGYVLTKTPLMAKSDLYKISGHWDHYKDGMFVLGDEEKDEEVFALRPMTCPFQYTIYNAEQHSYRDLPIRYGETSTLFRNESSGEMHGLIRVRQFTLADGHLIVTPEQLEEEFKGVLELIQYLMKTLGIDEDISYRFSKWDPNNTEKYINDPEAWNKTQDTMRTILDHLKINYVEADDEAAFYGPKLDLQCRNVHGKEDTLFTVQIDFALAERFDMSYIDKNGEKKRPYIIHRSSIGCYERTLAMLIEKYAGAFPTWLSPVQVKVLPISDKYNDYAESVVKSLRNKGVRIEADYRAEKIGYKIREARLERTPYILVVGEKEAANNEVSVRSRKNDDEGAIKLDAFTERLLNEIATKER.

In terms of domain architecture, TGS spans 1-61 (MIKVTLKDGS…KEDVSLSICT (61 aa)). The segment at 240 to 540 (DHNKLGRELK…LIEKYAGAFP (301 aa)) is catalytic. C335, H386, and H517 together coordinate Zn(2+).

The protein belongs to the class-II aminoacyl-tRNA synthetase family. As to quaternary structure, homodimer. The cofactor is Zn(2+).

The protein resides in the cytoplasm. The enzyme catalyses tRNA(Thr) + L-threonine + ATP = L-threonyl-tRNA(Thr) + AMP + diphosphate + H(+). In terms of biological role, catalyzes the attachment of threonine to tRNA(Thr) in a two-step reaction: L-threonine is first activated by ATP to form Thr-AMP and then transferred to the acceptor end of tRNA(Thr). Also edits incorrectly charged L-seryl-tRNA(Thr). In Clostridium botulinum (strain Eklund 17B / Type B), this protein is Threonine--tRNA ligase.